Here is a 156-residue protein sequence, read N- to C-terminus: Endoribonuclease YbeY (156 aa).

Zn(2+)-binding residues include His-122, His-126, and His-132.

This sequence belongs to the endoribonuclease YbeY family. Zn(2+) is required as a cofactor.

It localises to the cytoplasm. In terms of biological role, single strand-specific metallo-endoribonuclease involved in late-stage 70S ribosome quality control and in maturation of the 3' terminus of the 16S rRNA. The protein is Endoribonuclease YbeY of Geobacillus thermodenitrificans (strain NG80-2).